Here is a 127-residue protein sequence, read N- to C-terminus: UPF0325 protein VP2321 (127 aa).

This sequence belongs to the UPF0325 family.

This Vibrio parahaemolyticus serotype O3:K6 (strain RIMD 2210633) protein is UPF0325 protein VP2321.